The chain runs to 551 residues: Arginine--tRNA ligase (551 aa).

The 'HIGH' region motif lies at alanine 125–histidine 135.

The protein belongs to the class-I aminoacyl-tRNA synthetase family. Monomer.

The protein localises to the cytoplasm. The enzyme catalyses tRNA(Arg) + L-arginine + ATP = L-arginyl-tRNA(Arg) + AMP + diphosphate. The chain is Arginine--tRNA ligase from Nitratidesulfovibrio vulgaris (strain ATCC 29579 / DSM 644 / CCUG 34227 / NCIMB 8303 / VKM B-1760 / Hildenborough) (Desulfovibrio vulgaris).